The primary structure comprises 1178 residues: MSARVCKTHRVYVGRDVRNFMDIPDLIEIQLRSYDTFLHGARNTPSGADTLISGTREELGLEDVFKTTFPIESSTGDMTLEYQSYSLDEKNIKFSEAECKQKGLTYAIPLKALVDLRFNNTGEIRRKDIYMGDIPKMTERGTFIINGAERVVVSQIHRSPGVVFSHEKDKEGREVFSSRIIPYRGSWLEFEIDQKKDLIYAKLDKKRRILGTVFLRALHYETREQIIEAFYAIEKTPVCQDRAEYELLTGKILARSVTVENEQGETRVLYKAGEKIHPHVIDDLLQNGICEVYIINLEAEGSLRSAVVINCLEREEMKFSKSGAQDELSREEALCIVYSALRPSDPMTMDAAEKDLQTMFFSPRRYDLGRVGRYKLNKKFRSDSPTTECTLTLDDIVNTMKFLIRMYSGDAQEDDIDHLGNRRIRSVGELMTNTLKTAFLRMERIAKERMSSKETETIKPQDLISIKPIMAAIKEFFGASQLSQFMDQVNPLAELTHKRRLNALGPGGLSRERAGFEVRDVHYTHYGRMCPIETPEGPNIGLIVSMANYARVNGYGFLEVPYVRVRDGVVTKEIEYLDAMDEDRYYIGQDSTAVGPDGVIRVDHVSCRHRGDYSTRSPKDIQYMDVSPKQIISVSASLIPFLEHDDANRALMGSNMQRQGVPLIFPEPPRVGTGMEEKCAYDSGVLVKAKQDGTVAYVSSEKIVVCSAAASGEEQEVVYPLLKYQRTNQDTCYHQRPIVHVGDRVQVGDALADGPATYRGELALGRNILVGFVPWNGYNYEDAILISHRVVKEDMFTSVHIKEFSTEVRETKLGSERMTNDIPNKSEKNLDNLDAEGIIRIGSKVRAGDVLIGKITPKSESETTPEFRLLNSIFGEKAKEVRDSSLRVPHGVEGTVIDVQRLRRSEGDDLNPGVSEVVKVLIATKRKLREGDKMAGRHGNKGIVARILPEEDMPYLDDGTPLDVCLNPLGVPSRMNIGQILESELGLAGLRLDEWYESPVFQSPSNEQIGEKLMQAGFPTNSKVMLRDGRTGDYFQNPVFVGVIYFMKLAHLVDDKMHARSTGPYSLVTQQPLGGKAQFGGQRLGEMEVWALEAYGAANTLQELLTIKSDDMHGRSKIYEAIVKGEASSPTGIPESFNVLVQELRGLALDFTIYDAKGKQIPLTERDEEMTNKIGSKF.

This sequence belongs to the RNA polymerase beta chain family. In terms of assembly, the RNAP catalytic core consists of 2 alpha, 1 beta, 1 beta' and 1 omega subunit. When a sigma factor is associated with the core the holoenzyme is formed, which can initiate transcription.

The catalysed reaction is RNA(n) + a ribonucleoside 5'-triphosphate = RNA(n+1) + diphosphate. DNA-dependent RNA polymerase catalyzes the transcription of DNA into RNA using the four ribonucleoside triphosphates as substrates. The sequence is that of DNA-directed RNA polymerase subunit beta from Treponema pallidum (strain Nichols).